A 177-amino-acid chain; its full sequence is Austinoid biosynthesis clusters protein F (177 aa).

This sequence belongs to the trt14 isomerase family. Homodimer.

The protein operates within secondary metabolite biosynthesis; terpenoid biosynthesis. Part of the gene cluster B that mediates the biosynthesis of austinol and dehydroaustinol, two fungal meroterpenoids. The first step of the pathway is the synthesis of 3,5-dimethylorsellinic acid by the polyketide synthase ausA. 3,5-dimethylorsellinic acid is then prenylated by the polyprenyl transferase ausN. Further epoxidation by the FAD-dependent monooxygenase ausM and cyclization by the probable terpene cyclase ausL lead to the formation of protoaustinoid A. Protoaustinoid A is then oxidized to spiro-lactone preaustinoid A3 by the combined action of the FAD-binding monooxygenases ausB and ausC, and the dioxygenase ausE. Acid-catalyzed keto-rearrangement and ring contraction of the tetraketide portion of preaustinoid A3 by ausJ lead to the formation of preaustinoid A4. The aldo-keto reductase ausK, with the help of ausH, is involved in the next step by transforming preaustinoid A4 into isoaustinone which is in turn hydroxylated by the P450 monooxygenase ausI to form austinolide. Finally, the cytochrome P450 monooxygenase ausG modifies austinolide to austinol. Austinol can be further modified to dehydroaustinol which forms a diffusible complex with diorcinol that initiates conidiation. Due to genetic rearrangements of the clusters and the subsequent loss of some enzymes, the end products of the Emericella nidulans austinoid biosynthesis clusters are austinol and dehydroaustinol, even if additional enzymes, such as the O-acetyltransferase ausQ and the cytochrome P450 monooxygenase ausR are still functional. The protein is Austinoid biosynthesis clusters protein F of Emericella nidulans (strain FGSC A4 / ATCC 38163 / CBS 112.46 / NRRL 194 / M139) (Aspergillus nidulans).